The chain runs to 149 residues: Calmodulin (149 aa).

4 EF-hand domains span residues 8-43 (EQIA…LGQN), 44-79 (PTEA…KMAD), 81-116 (DTEE…LGEK), and 117-149 (LSDE…MLSK). Residues aspartate 21, aspartate 23, aspartate 25, asparagine 27, glutamate 32, aspartate 57, aspartate 59, asparagine 61, threonine 63, glutamate 68, aspartate 94, aspartate 96, asparagine 98, and glutamate 105 each contribute to the Ca(2+) site. Lysine 116 is subject to N6,N6,N6-trimethyllysine. Ca(2+) contacts are provided by aspartate 130, aspartate 132, aspartate 134, glutamine 136, and glutamate 141.

The protein belongs to the calmodulin family.

In terms of biological role, calmodulin mediates the control of a large number of enzymes, ion channels and other proteins by Ca(2+). Among the enzymes to be stimulated by the calmodulin-Ca(2+) complex are a number of protein kinases and phosphatases. This Physarum polycephalum (Slime mold) protein is Calmodulin.